Reading from the N-terminus, the 65-residue chain is Conotoxin VnMLCL-031 (65 aa).

A signal peptide spans 1–19; sequence MLCLPXFIILLLLASPAAP. A propeptide spanning residues 20-43 is cleaved from the precursor; that stretch reads NPLQTRXQSNLIRAGPEDANIKTX. Ile-64 is subject to Isoleucine amide.

Belongs to the conotoxin T superfamily. In terms of tissue distribution, expressed by the venom duct.

Its subcellular location is the secreted. The sequence is that of Conotoxin VnMLCL-031 from Conus ventricosus (Mediterranean cone).